The following is a 324-amino-acid chain: tRNA U34 carboxymethyltransferase (324 aa).

Residues lysine 92, tryptophan 106, lysine 111, glycine 131, aspartate 153–threonine 155, isoleucine 181–glutamate 182, methionine 197, tyrosine 201, and arginine 316 each bind carboxy-S-adenosyl-L-methionine.

Belongs to the class I-like SAM-binding methyltransferase superfamily. CmoB family. In terms of assembly, homotetramer.

The enzyme catalyses carboxy-S-adenosyl-L-methionine + 5-hydroxyuridine(34) in tRNA = 5-carboxymethoxyuridine(34) in tRNA + S-adenosyl-L-homocysteine + H(+). Functionally, catalyzes carboxymethyl transfer from carboxy-S-adenosyl-L-methionine (Cx-SAM) to 5-hydroxyuridine (ho5U) to form 5-carboxymethoxyuridine (cmo5U) at position 34 in tRNAs. The polypeptide is tRNA U34 carboxymethyltransferase (Methylococcus capsulatus (strain ATCC 33009 / NCIMB 11132 / Bath)).